The sequence spans 157 residues: Nascent polypeptide-associated complex subunit beta (157 aa).

Residues 1–28 form a disordered region; that stretch reads MPVDPEKLAKLQKSSAKKVGGSRVKAKK. One can recognise an NAC-A/B domain in the interval 33-98; sequence EQDDTKLIEA…PQEKNITQLI (66 aa). Residues 124 to 157 are disordered; the sequence is KTPKDFNTGSANAAADAGGEDIPDLVDQKFDDVE.

The protein belongs to the NAC-beta family. As to quaternary structure, part of the nascent polypeptide-associated complex (NAC), consisting of EGD2 and EGD1. NAC associates with ribosomes via EGD1.

The protein localises to the cytoplasm. It localises to the nucleus. Its function is as follows. Component of the nascent polypeptide-associated complex (NAC), a dynamic component of the ribosomal exit tunnel, protecting the emerging polypeptides from interaction with other cytoplasmic proteins to ensure appropriate nascent protein targeting. The NAC complex also promotes mitochondrial protein import by enhancing productive ribosome interactions with the outer mitochondrial membrane and blocks the inappropriate interaction of ribosomes translating non-secretory nascent polypeptides with translocation sites in the membrane of the endoplasmic reticulum. EGD1 may act as a transcription factor that exert a negative effect on the expression of several genes that are transcribed by RNA polymerase II. This chain is Nascent polypeptide-associated complex subunit beta (EGD1), found in Candida albicans (strain SC5314 / ATCC MYA-2876) (Yeast).